Here is a 339-residue protein sequence, read N- to C-terminus: Anthranilate phosphoribosyltransferase (339 aa).

5-phospho-alpha-D-ribose 1-diphosphate is bound by residues G81, G84–D85, S89, N91–T94, K109–S117, and A121. G81 serves as a coordination point for anthranilate. S93 contacts Mg(2+). Residue N112 coordinates anthranilate. R167 contributes to the anthranilate binding site. 2 residues coordinate Mg(2+): D226 and E227.

It belongs to the anthranilate phosphoribosyltransferase family. As to quaternary structure, homodimer. Mg(2+) serves as cofactor.

It carries out the reaction N-(5-phospho-beta-D-ribosyl)anthranilate + diphosphate = 5-phospho-alpha-D-ribose 1-diphosphate + anthranilate. Its pathway is amino-acid biosynthesis; L-tryptophan biosynthesis; L-tryptophan from chorismate: step 2/5. Catalyzes the transfer of the phosphoribosyl group of 5-phosphorylribose-1-pyrophosphate (PRPP) to anthranilate to yield N-(5'-phosphoribosyl)-anthranilate (PRA). The protein is Anthranilate phosphoribosyltransferase of Rhodopseudomonas palustris (strain BisA53).